A 534-amino-acid chain; its full sequence is Prolyl 4-hydroxylase subunit alpha-1 (534 aa).

The signal sequence occupies residues 1 to 17; it reads MIWVVLMMAILLPQSLA. N-linked (GlcNAc...) asparagine glycosylation is present at Asn113. One copy of the TPR repeat lies at 205-238; that stretch reads VSVLDYLSYAVYQQGDLDKALLLTKKLLELDPEH. An N-linked (GlcNAc...) asparagine glycan is attached at Asn259. Positions 411–519 constitute a Fe2OG dioxygenase domain; the sequence is TAEELQVANY…KWVSNKWLHE (109 aa). Fe cation-binding residues include His429, Asp431, and His500. Residue Lys510 participates in 2-oxoglutarate binding.

It belongs to the P4HA family. Heterotetramer of two alpha-1 chains and two beta chains (P4HB)(the beta chain is the multi-functional PDI), where P4HB plays the role of a structural subunit; this tetramer catalyzes the formation of 4-hydroxyproline in collagen. Requires Fe(2+) as cofactor. It depends on L-ascorbate as a cofactor. As to expression, expressed at least in brain, heart and lung.

It localises to the endoplasmic reticulum lumen. The catalysed reaction is L-prolyl-[collagen] + 2-oxoglutarate + O2 = trans-4-hydroxy-L-prolyl-[collagen] + succinate + CO2. Its activity is regulated as follows. Inhibited by poly(L-proline). In terms of biological role, catalyzes the post-translational formation of 4-hydroxyproline in -Xaa-Pro-Gly- sequences in collagens and other proteins. The chain is Prolyl 4-hydroxylase subunit alpha-1 (P4ha1) from Mus musculus (Mouse).